Reading from the N-terminus, the 475-residue chain is uncharacterized protein (475 aa).

It to E.coli YihN.

This is an uncharacterized protein from Mycoplasma pneumoniae (strain ATCC 29342 / M129 / Subtype 1) (Mycoplasmoides pneumoniae).